Reading from the N-terminus, the 410-residue chain is Probable tRNA sulfurtransferase (410 aa).

The 110-residue stretch at 58–167 (AELTRRLQEV…RREIFVSVER (110 aa)) folds into the THUMP domain. ATP-binding positions include 185–186 (LL), 210–211 (HF), Arg267, Gly289, and Gln298.

This sequence belongs to the ThiI family.

The protein localises to the cytoplasm. The catalysed reaction is [ThiI sulfur-carrier protein]-S-sulfanyl-L-cysteine + a uridine in tRNA + 2 reduced [2Fe-2S]-[ferredoxin] + ATP + H(+) = [ThiI sulfur-carrier protein]-L-cysteine + a 4-thiouridine in tRNA + 2 oxidized [2Fe-2S]-[ferredoxin] + AMP + diphosphate. It carries out the reaction [ThiS sulfur-carrier protein]-C-terminal Gly-Gly-AMP + S-sulfanyl-L-cysteinyl-[cysteine desulfurase] + AH2 = [ThiS sulfur-carrier protein]-C-terminal-Gly-aminoethanethioate + L-cysteinyl-[cysteine desulfurase] + A + AMP + 2 H(+). It functions in the pathway cofactor biosynthesis; thiamine diphosphate biosynthesis. Its function is as follows. Catalyzes the ATP-dependent transfer of a sulfur to tRNA to produce 4-thiouridine in position 8 of tRNAs, which functions as a near-UV photosensor. Also catalyzes the transfer of sulfur to the sulfur carrier protein ThiS, forming ThiS-thiocarboxylate. This is a step in the synthesis of thiazole, in the thiamine biosynthesis pathway. The sulfur is donated as persulfide by IscS. This is Probable tRNA sulfurtransferase from Nocardia farcinica (strain IFM 10152).